We begin with the raw amino-acid sequence, 406 residues long: Secretion apparatus protein BsaZ (406 aa).

4 consecutive transmembrane segments (helical) span residues 28–48 (IVALIVIATGALAAPALVDLT), 80–100 (IAAPFVLLCAAAGALPSLVQS), 137–157 (ALLYVGVFALTVRVFAGLYHA), and 175–195 (IVLTVRLVLLFLLCALPVLIL). The segment at 341–406 (AANRGGPPPE…APARTGDQNA (66 aa)) is disordered. Residues 370–399 (DACADNAFPDDAPPGAAAPNAGSPDGGAPA) show a composition bias toward low complexity.

This sequence belongs to the type III secretion exporter family.

It is found in the cell membrane. In terms of biological role, part of the bsa type III secretion system, is involved in the intracellular replication of invading bacteria inside the host cell. Probably necessary for the lysis of the vacuole membrane and escape into the host cell cytoplasm. The sequence is that of Secretion apparatus protein BsaZ (bsaZ) from Burkholderia pseudomallei (strain 668).